A 469-amino-acid chain; its full sequence is Cytosolic beta-glucosidase (469 aa).

Substrate is bound by residues Gln17, His120, and Asn164. The Proton donor role is filled by Glu165. Substrate is bound at residue Tyr309. Residue Glu373 is the Nucleophile of the active site. Residues Trp417 and Glu424 to Trp425 contribute to the substrate site.

It belongs to the glycosyl hydrolase 1 family. Klotho subfamily. The N-terminus is blocked. In terms of tissue distribution, present in hepatocytes (at protein level).

The protein resides in the cytoplasm. The protein localises to the cytosol. It catalyses the reaction Hydrolysis of terminal, non-reducing beta-D-glucosyl residues with release of beta-D-glucose.. The enzyme catalyses a beta-D-glucosyl-(1&lt;-&gt;1')-N-acylsphing-4-enine + H2O = an N-acylsphing-4-enine + D-glucose. The catalysed reaction is a beta-D-galactosyl-(1&lt;-&gt;1')-N-acylsphing-4-enine + H2O = an N-acylsphing-4-enine + D-galactose. It carries out the reaction beta-D-glucosyl-(1&lt;-&gt;1)-sphing-4-enine + H2O = sphing-4-enine + D-glucose. It catalyses the reaction beta-D-glucosyl-(1&lt;-&gt;1)-N-octadecanoylsphing-4-enine + H2O = N-octadecanoylsphing-4-enine + D-glucose. The enzyme catalyses beta-D-galactosyl-(1&lt;-&gt;1)-sphing-4-enine + H2O = sphing-4-enine + D-galactose. The catalysed reaction is beta-D-galactosyl-(1&lt;-&gt;1')-N-octadecanoylsphing-4-enine + H2O = N-octadecanoylsphing-4-enine + D-galactose. It carries out the reaction a beta-D-xylosyl-(1&lt;-&gt;1')-N-acylsphing-4-enine + cholesterol = cholesteryl 3-beta-D-xyloside + an N-acylsphing-4-enine. With respect to regulation, inhibited by 2,4-dinitrophenyl-2-fluoro-2-deoxy-beta-D-glucopyranoside. Functionally, neutral cytosolic beta-glycosidase with a broad substrate specificity that could play a role in the catabolism of glycosylceramides. Has a significant glucosylceramidase activity in vitro. However, that activity is relatively low and its significance in vivo is not clear. Hydrolyzes galactosylceramide/GalCer, glucosylsphingosine/GlcSph and galactosylsphingosine/GalSph. However, the in vivo relevance of these activities is unclear. It can also hydrolyze a broad variety of dietary glycosides including phytoestrogens, flavonols, flavones, flavanones and cyanogens in vitro and could therefore play a role in the metabolism of xenobiotics. Possesses transxylosylase activity in vitro using xylosylated ceramides/XylCers (such as beta-D-xylosyl-(1&lt;-&gt;1')-N-acylsphing-4-enine) as xylosyl donors and cholesterol as acceptor. Could also play a role in the catabolism of cytosolic sialyl free N-glycans. The sequence is that of Cytosolic beta-glucosidase from Cavia porcellus (Guinea pig).